We begin with the raw amino-acid sequence, 382 residues long: Gap junction alpha-1 protein (382 aa).

Topologically, residues 2-23 (GDWSALGKLLDKVQAYSTAGGK) are cytoplasmic. A Phosphoserine modification is found at serine 5. Residues 24–44 (VWLSVLFIFRILLLGTAVESA) traverse the membrane as a helical segment. Over 45–76 (WGDEQSAFRCNTQQPGCENVCYDKSFPISHVR) the chain is Extracellular. 2 disulfide bridges follow: cysteine 54–cysteine 192 and cysteine 187–cysteine 198. Residues 77 to 97 (FWVLQIIFVSVPTLLYLAHVF) form a helical membrane-spanning segment. Over 98-155 (YVMRKEEKLNKKEEELKVAQTDGVNVEMHLKQIEIKKFKYGIEEHGKVKMRGGLLRTY) the chain is Cytoplasmic. Lysine 144 participates in a covalent cross-link: Glycyl lysine isopeptide (Lys-Gly) (interchain with G-Cter in SUMO). The helical transmembrane segment at 156–176 (IISILFKSVFEVAFLLIQWYI) threads the bilayer. The Extracellular segment spans residues 177 to 207 (YGFSLSAVYTCKRDPCPHQVDCFLSRPTEKT). A helical transmembrane segment spans residues 208-228 (IFIIFMLVVSLVSLALNIIEL). Residues 229–382 (FYVFFKGVKD…SRPRPDDLEI (154 aa)) lie on the Cytoplasmic side of the membrane. Residue lysine 237 forms a Glycyl lysine isopeptide (Lys-Gly) (interchain with G-Cter in SUMO) linkage. Residues 244 to 382 (SDPYHATTGP…SRPRPDDLEI (139 aa)) are interaction with NOV. Tyrosine 247 carries the phosphotyrosine modification. Residues serine 255, serine 257, and serine 262 each carry the phosphoserine modification. The segment at 264–382 (KYAYFNGCSS…SRPRPDDLEI (119 aa)) is interaction with UBQLN4. Residue cysteine 271 is modified to S-nitrosocysteine. A Phosphothreonine modification is found at threonine 275. Phosphoserine occurs at positions 306, 314, and 325. Residues 317–332 (QNRMGQAGSTISNSHA) show a composition bias toward polar residues. Residues 317–382 (QNRMGQAGST…SRPRPDDLEI (66 aa)) are disordered. Phosphothreonine is present on threonine 326. Phosphoserine occurs at positions 328, 330, 341, and 365. Positions 362-374 (RPSSRASSRASSR) are enriched in low complexity. At serine 368 the chain carries Phosphoserine; by PKC/PRKCG and PKC/PRKCD. Phosphoserine occurs at positions 369 and 373.

It belongs to the connexin family. Alpha-type (group II) subfamily. In terms of assembly, a connexon is composed of a hexamer of connexins. Interacts with CSNK1D. Interacts with RIC1/CIP150. Interacts (via C-terminus) with TJP1. Interacts (via C-terminus) with SRC (via SH3 domain). Interacts (not ubiquitinated) with UBQLN4 (via UBA domain). Interacts with CNST. Interacts with SGSM3. Interacts with NOV. Interacts with TMEM65. Interacts with ANK3/ANKG and PKP2. Post-translationally, phosphorylation at Ser-325, Ser-328 and Ser-330 by CK1 modulates gap junction assembly. Phosphorylated at Ser-368 by PRKCG; phosphorylation induces disassembly of gap junction plaques and inhibition of gap junction activity. Phosphorylation at Ser-368 by PRKCD triggers its internalization into small vesicles leading to proteasome-mediated degradation. In terms of processing, sumoylated with SUMO1, SUMO2 and SUMO3, which may regulate the level of functional Cx43 gap junctions at the plasma membrane. May be desumoylated by SENP1 or SENP2. Acetylated in the developing cortex; leading to delocalization from the cell membrane. Post-translationally, S-nitrosylation at Cys-271 is enriched at the muscle endothelial gap junction in arteries, it augments channel permeability and may regulate of smooth muscle cell to endothelial cell communication. Expressed in heart, non-sensory epithelial cells, and in fibrocytes of the spiral ligament and the spiral limbus. Expressed in bladder smooth muscle cells (at protein level). Expressed in astrocytes (at protein level).

The protein localises to the cell membrane. It is found in the cell junction. It localises to the gap junction. Its subcellular location is the endoplasmic reticulum. Functionally, gap junction protein that acts as a regulator of bladder capacity. A gap junction consists of a cluster of closely packed pairs of transmembrane channels, the connexons, through which materials of low MW diffuse from one cell to a neighboring cell. Negative regulator of bladder functional capacity: acts by enhancing intercellular electrical and chemical transmission, thus sensitizing bladder muscles to cholinergic neural stimuli and causing them to contract. May play a role in cell growth inhibition through the regulation of NOV expression and localization. Plays an essential role in gap junction communication in the ventricles. Connexin 43 is possibly the ATP-induced pore of mouse macrophages. The sequence is that of Gap junction alpha-1 protein (Gja1) from Mus musculus (Mouse).